Reading from the N-terminus, the 123-residue chain is UPF0231 protein plu3616 (123 aa).

This sequence belongs to the UPF0231 family.

In Photorhabdus laumondii subsp. laumondii (strain DSM 15139 / CIP 105565 / TT01) (Photorhabdus luminescens subsp. laumondii), this protein is UPF0231 protein plu3616.